The sequence spans 401 residues: Golgi membrane protein 1 (401 aa).

M1 is modified (N-acetylmethionine). At 1 to 12 (MMGLGNGRRSMK) the chain is on the cytoplasmic side. The chain crosses the membrane as a helical; Signal-anchor for type II membrane protein span at residues 13 to 35 (SPPLVLAALVACIIVLGFNYWIA). Over 36-401 (SSRSVDLQTR…DQREKRNHTL (366 aa)) the chain is Lumenal. A coiled-coil region spans residues 40–205 (VDLQTRIMEL…QRQQLQALSE (166 aa)). N109 carries an N-linked (GlcNAc...) (complex) asparagine glycan. N144 carries N-linked (GlcNAc...) asparagine glycosylation. Residues 178–401 (TKKGNEAVAS…DQREKRNHTL (224 aa)) form a disordered region. S187 is modified (phosphoserine). The span at 228-238 (LGNSKSQTPAP) shows a compositional bias: polar residues. Basic and acidic residues-rich tracts occupy residues 244-255 (LDSKRQVEKEET) and 264-285 (EPQR…DRPV). Over residues 286 to 295 (GGRGFGGAGE) the composition is skewed to gly residues. The span at 298–312 (QTPQVQAALSVSQEN) shows a compositional bias: polar residues. S309 is modified (phosphoserine; by FAM20C). Acidic residues predominate over residues 350 to 360 (DYNMDENEAES). Over residues 381–395 (EDQKRDTINLLDQRE) the composition is skewed to basic and acidic residues. N398 is a glycosylation site (N-linked (GlcNAc...) asparagine).

The protein belongs to the GOLM family. As to quaternary structure, interacts with DYM. Glycosylated. Post-translationally, phosphorylation sites are present in the extracellular medium. As to expression, widely expressed. Highly expressed in colon, prostate, trachea and stomach. Expressed at lower level in testis, muscle, lymphoid tissues, white blood cells and spleen. Predominantly expressed by cells of the epithelial lineage. Expressed at low level in normal liver. Expression significantly increases in virus (HBV, HCV) infected liver. Expression does not increase in liver disease due to non-viral causes (alcohol-induced liver disease, autoimmune hepatitis). Increased expression in hepatocytes appears to be a general feature of advanced liver disease. In liver tissue from patients with adult giant-cell hepatitis (GCH), it is strongly expressed in hepatocytes-derived syncytial giant cells. Constitutively expressed by biliary epithelial cells but not by hepatocytes.

Its subcellular location is the golgi apparatus. The protein resides in the cis-Golgi network membrane. Functionally, unknown. Cellular response protein to viral infection. The protein is Golgi membrane protein 1 (GOLM1) of Homo sapiens (Human).